A 79-amino-acid chain; its full sequence is Acyl carrier protein (79 aa).

The 76-residue stretch at 2–77 (SDVAERVKKI…DAVNFLEKAT (76 aa)) folds into the Carrier domain. Serine 37 carries the O-(pantetheine 4'-phosphoryl)serine modification.

Belongs to the acyl carrier protein (ACP) family. In terms of processing, 4'-phosphopantetheine is transferred from CoA to a specific serine of apo-ACP by AcpS. This modification is essential for activity because fatty acids are bound in thioester linkage to the sulfhydryl of the prosthetic group.

Its subcellular location is the cytoplasm. It functions in the pathway lipid metabolism; fatty acid biosynthesis. Functionally, carrier of the growing fatty acid chain in fatty acid biosynthesis. The protein is Acyl carrier protein of Methylocella silvestris (strain DSM 15510 / CIP 108128 / LMG 27833 / NCIMB 13906 / BL2).